A 503-amino-acid polypeptide reads, in one-letter code: Na(+)-translocating NADH-quinone reductase subunit B (503 aa).

The next 5 helical transmembrane spans lie at 55–75 (MMLV…NSGV), 94–114 (ISGF…FSIL), 120–140 (IFLP…VLFA), 161–181 (TLPP…GVVV), and 186–206 (FGGT…FLFF). Position 248 is an FMN phosphoryl threonine (Thr-248). The next 5 helical transmembrane spans lie at 361-381 (TSTF…IASW), 387-407 (FGIG…LIVG), 417-437 (FFIP…LVFM), 452-472 (WIYG…NPAY), and 475-495 (GVML…YFAV).

Belongs to the NqrB/RnfD family. As to quaternary structure, composed of six subunits; NqrA, NqrB, NqrC, NqrD, NqrE and NqrF. Requires FMN as cofactor.

The protein resides in the cell inner membrane. The catalysed reaction is a ubiquinone + n Na(+)(in) + NADH + H(+) = a ubiquinol + n Na(+)(out) + NAD(+). Functionally, NQR complex catalyzes the reduction of ubiquinone-1 to ubiquinol by two successive reactions, coupled with the transport of Na(+) ions from the cytoplasm to the periplasm. NqrA to NqrE are probably involved in the second step, the conversion of ubisemiquinone to ubiquinol. The protein is Na(+)-translocating NADH-quinone reductase subunit B of Chlamydia caviae (strain ATCC VR-813 / DSM 19441 / 03DC25 / GPIC) (Chlamydophila caviae).